A 395-amino-acid polypeptide reads, in one-letter code: Probable isocitrate dehydrogenase [NAD] gamma 2, mitochondrial (395 aa).

The N-terminal 25 residues, 1–25, are a transit peptide targeting the mitochondrion; it reads MLAAGSCSVRTILQPALLLGHSREV. T117 lines the citrate pocket. Residues R133, R164, and D251 each contribute to the substrate site. D251 is a Mn(2+) binding site. N321 provides a ligand contact to ADP.

The protein belongs to the isocitrate and isopropylmalate dehydrogenases family. In terms of assembly, heterooligomer of subunits alpha (IDH3A), beta (IDH3B), and gamma (IDH3G) in the apparent ratio of 2:1:1. The heterodimer containing one IDH3A and one IDH3B subunit and the heterodimer containing one IDH3A and one IDH3G subunit assemble into a heterotetramer (which contains two subunits of IDH3A, one of IDH3B and one of IDH3G) and further into the heterooctamer. The cofactor is Mg(2+). Mn(2+) is required as a cofactor.

It is found in the mitochondrion. The heterotetramer and the heterodimer composed of IDH3A and IDH3G subunits can be allosterically activated by citrate (CIT) or/and ADP, and the two activators can act independently or synergistically. The heterodimer composed of IDH3A and IDH3B subunits cannot be allosterically regulated and the allosteric regulation of the heterotetramer is through the IDH3G subunit and not the IDH3B subunit. The IDH3G subunit contains the allosteric site which consists of a CIT-binding site and an ADP-binding site, and the binding of CIT and ADP causes conformational changes at the allosteric site which are transmitted to the active site in the catalytic subunit (IDH3A) through a cascade of conformational changes at the heterodimer interface, leading to stabilization of the isocitrate-binding at the active site and thus activation of the enzyme. ATP can activate the heterotetramer and the heterodimer composed of IDH3A and IDH3G subunits at low concentrations but inhibits their activities at high concentrations, whereas ATP exhibits only inhibitory effect on the heterodimer composed of IDH3A and IDH3B subunits. Functionally, regulatory subunit which plays a role in the allosteric regulation of the enzyme catalyzing the decarboxylation of isocitrate (ICT) into alpha-ketoglutarate. The heterodimer composed of the alpha (IDH3A) and beta (IDH3B) subunits and the heterodimer composed of the alpha (IDH3A) and gamma (IDH3G) subunits, have considerable basal activity but the full activity of the heterotetramer (containing two subunits of IDH3A, one of IDH3B and one of IDH3G) requires the assembly and cooperative function of both heterodimers. The chain is Probable isocitrate dehydrogenase [NAD] gamma 2, mitochondrial from Rattus norvegicus (Rat).